The primary structure comprises 353 residues: Photosystem II protein D1 (353 aa).

T2 carries the N-acetylthreonine modification. A Phosphothreonine modification is found at T2. 3 helical membrane-spanning segments follow: residues 29-46 (YIGW…TATS), 118-133 (HFLL…EWEL), and 142-156 (WIAV…AATA). Residue H118 coordinates chlorophyll a. Position 126 (Y126) interacts with pheophytin a. Positions 170 and 189 each coordinate [CaMn4O5] cluster. Residues 197 to 218 (FHMLGVAGVFGGSLFSAMHGSL) form a helical membrane-spanning segment. H198 provides a ligand contact to chlorophyll a. A quinone contacts are provided by residues H215 and 264–265 (SF). H215 is a binding site for Fe cation. Fe cation is bound at residue H272. A helical membrane pass occupies residues 274-288 (FLAAWPVVGIWFTSL). Residues H332, E333, D342, and A344 each contribute to the [CaMn4O5] cluster site. Positions 345–353 (AIDAPSVNG) are excised as a propeptide.

The protein belongs to the reaction center PufL/M/PsbA/D family. PSII is composed of 1 copy each of membrane proteins PsbA, PsbB, PsbC, PsbD, PsbE, PsbF, PsbH, PsbI, PsbJ, PsbK, PsbL, PsbM, PsbT, PsbX, PsbY, PsbZ, Psb30/Ycf12, at least 3 peripheral proteins of the oxygen-evolving complex and a large number of cofactors. It forms dimeric complexes. The D1/D2 heterodimer binds P680, chlorophylls that are the primary electron donor of PSII, and subsequent electron acceptors. It shares a non-heme iron and each subunit binds pheophytin, quinone, additional chlorophylls, carotenoids and lipids. D1 provides most of the ligands for the Mn4-Ca-O5 cluster of the oxygen-evolving complex (OEC). There is also a Cl(-1) ion associated with D1 and D2, which is required for oxygen evolution. The PSII complex binds additional chlorophylls, carotenoids and specific lipids. serves as cofactor. Post-translationally, tyr-161 forms a radical intermediate that is referred to as redox-active TyrZ, YZ or Y-Z. C-terminally processed by CTPA; processing is essential to allow assembly of the oxygen-evolving complex and thus photosynthetic growth.

It localises to the plastid. The protein resides in the chloroplast thylakoid membrane. The enzyme catalyses 2 a plastoquinone + 4 hnu + 2 H2O = 2 a plastoquinol + O2. In terms of biological role, photosystem II (PSII) is a light-driven water:plastoquinone oxidoreductase that uses light energy to abstract electrons from H(2)O, generating O(2) and a proton gradient subsequently used for ATP formation. It consists of a core antenna complex that captures photons, and an electron transfer chain that converts photonic excitation into a charge separation. The D1/D2 (PsbA/PsbD) reaction center heterodimer binds P680, the primary electron donor of PSII as well as several subsequent electron acceptors. The polypeptide is Photosystem II protein D1 (Coffea arabica (Arabian coffee)).